The sequence spans 470 residues: Ribosomal protein uS12 methylthiotransferase RimO (470 aa).

The MTTase N-terminal domain occupies proline 20–alanine 131. [4Fe-4S] cluster-binding residues include cysteine 29, cysteine 65, cysteine 94, cysteine 169, cysteine 173, and cysteine 176. The Radical SAM core domain maps to threonine 155–alanine 384. In terms of domain architecture, TRAM spans alanine 387 to serine 458.

This sequence belongs to the methylthiotransferase family. RimO subfamily. [4Fe-4S] cluster is required as a cofactor.

The protein resides in the cytoplasm. It catalyses the reaction L-aspartate(89)-[ribosomal protein uS12]-hydrogen + (sulfur carrier)-SH + AH2 + 2 S-adenosyl-L-methionine = 3-methylsulfanyl-L-aspartate(89)-[ribosomal protein uS12]-hydrogen + (sulfur carrier)-H + 5'-deoxyadenosine + L-methionine + A + S-adenosyl-L-homocysteine + 2 H(+). Its function is as follows. Catalyzes the methylthiolation of an aspartic acid residue of ribosomal protein uS12. In Synechococcus sp. (strain CC9311), this protein is Ribosomal protein uS12 methylthiotransferase RimO.